The primary structure comprises 394 residues: ATP-dependent RNA helicase fal1 (394 aa).

Positions 21–49 (SSFEEMNLKEDLLRGIYAYGYETPSAVQS) match the Q motif motif. Positions 52–222 (IIQICKGRDV…NKFTTNPVRI (171 aa)) constitute a Helicase ATP-binding domain. Residue 65 to 72 (AQSGTGKT) participates in ATP binding. S67 bears the Phosphoserine mark. The DEAD box motif lies at 170–173 (DEAD). The region spanning 233–394 (GLKQYFIAVE…EMPMNIGDMV (162 aa)) is the Helicase C-terminal domain.

This sequence belongs to the DEAD box helicase family. DDX48/FAL1 subfamily.

The protein localises to the nucleus. It is found in the nucleolus. The enzyme catalyses ATP + H2O = ADP + phosphate + H(+). Functionally, ATP-dependent RNA helicase involved in 40S ribosomal subunit biogenesis. Required for the processing and cleavage of 35S pre-rRNA at sites A0, A1, and A2, leading to mature 18S rRNA. In Schizosaccharomyces pombe (strain 972 / ATCC 24843) (Fission yeast), this protein is ATP-dependent RNA helicase fal1 (tif412).